The following is a 560-amino-acid chain: Arginine--tRNA ligase (560 aa).

Residues P121–H131 carry the 'HIGH' region motif.

This sequence belongs to the class-I aminoacyl-tRNA synthetase family. In terms of assembly, monomer.

It is found in the cytoplasm. The enzyme catalyses tRNA(Arg) + L-arginine + ATP = L-arginyl-tRNA(Arg) + AMP + diphosphate. This is Arginine--tRNA ligase from Exiguobacterium sp. (strain ATCC BAA-1283 / AT1b).